Consider the following 555-residue polypeptide: Luciferin 2-monooxygenase (555 aa).

Residues 1–11 (MKIIILSVILA) form the signal peptide. VWFD domains follow at residues 80–266 (IECR…EYCK) and 319–494 (GTCV…RLCN). 4 cysteine pairs are disulfide-bonded: Cys-82-Cys-222, Cys-321-Cys-454, Cys-343-Cys-493, and Cys-352-Cys-451. 2 N-linked (GlcNAc...) asparagine glycosylation sites follow: Asn-186 and Asn-408.

In terms of processing, the cysteine residues presumably exist in intramolecular disulfide bridges. The N-terminus is blocked.

It carries out the reaction Cypridina luciferin + O2 = oxidized Cypridina luciferin + hnu + CO2. This is Luciferin 2-monooxygenase from Vargula hilgendorfii (Sea firefly).